An 844-amino-acid polypeptide reads, in one-letter code: Serrate RNA effector molecule homolog B (844 aa).

Disordered regions lie at residues 1-90 (MADS…HGSD), 277-401 (EAAK…PRPL), 555-575 (ELLS…GNPT), and 794-825 (PNPY…MRGD). Composition is skewed to basic and acidic residues over residues 16–73 (FRRE…RHDI) and 277–337 (EAAK…ETRK). Acidic residues predominate over residues 349 to 359 (SDDGSDSESDT). Positions 376–397 (DTPKKEEETEKPKEKPKEDTVK) are enriched in basic and acidic residues.

It belongs to the ARS2 family. Interacts ncbp1/cbp80.

It localises to the nucleus. The protein resides in the nucleoplasm. Its subcellular location is the cytoplasm. Acts as a mediator between the cap-binding complex (CBC) and the primary microRNAs (miRNAs) processing machinery during cell proliferation. Contributes to the stability and delivery of capped primary miRNA transcripts to the primary miRNA processing complex, thereby playing a role in RNA-mediated gene silencing (RNAi) by miRNAs. The chain is Serrate RNA effector molecule homolog B (srrt-b) from Xenopus laevis (African clawed frog).